Consider the following 508-residue polypeptide: ATP synthase subunit alpha, chloroplastic (508 aa).

Residue G170 to T177 participates in ATP binding.

The protein belongs to the ATPase alpha/beta chains family. As to quaternary structure, F-type ATPases have 2 components, CF(1) - the catalytic core - and CF(0) - the membrane proton channel. CF(1) has five subunits: alpha(3), beta(3), gamma(1), delta(1), epsilon(1). CF(0) has four main subunits: a, b, b' and c.

The protein resides in the plastid. It is found in the chloroplast thylakoid membrane. The enzyme catalyses ATP + H2O + 4 H(+)(in) = ADP + phosphate + 5 H(+)(out). Produces ATP from ADP in the presence of a proton gradient across the membrane. The alpha chain is a regulatory subunit. The protein is ATP synthase subunit alpha, chloroplastic of Lactuca sativa (Garden lettuce).